Here is a 162-residue protein sequence, read N- to C-terminus: GKDINNNMEKAACATSSLVTQDDLQYHSLSKQQNESPQPLVGTGKKSPESLVKPDATPLSSPRHVRIKNWGSGMTFQDTLHHKAKGILTCRSKSCLGSIMTPKSLTRGPRDKPTPPDELLPQAIEFVNLSLEISVQDQIPPVCNDCQYYGSFKEAKIEEHLA.

Polar residues predominate over residues 24 to 37; it reads LQYHSLSKQQNESP. Positions 24–65 are disordered; sequence LQYHSLSKQQNESPQPLVGTGKKSPESLVKPDATPLSSPRHV. Residues Cys90 and Cys95 each contribute to the Zn(2+) site. Ser98 contacts (6R)-L-erythro-5,6,7,8-tetrahydrobiopterin. Glu132 is an L-arginine binding site. Residue His160 participates in FAD binding.

Belongs to the NOS family. As to quaternary structure, homodimer. Interacts with NHERF1. Interacts with GAPDH; induced by oxidatively-modified low-densitity lipoprotein (LDL(ox)). Interacts with S100A8 and S100A9 to form the iNOS-S100A8/9 transnitrosylase complex. Interacts with SPSB1, SPSB2 and SPSB4. Interacts with ELOC and CUL5 in the presence of SPSB1 or SPSB2 or SPSB4. Forms a complex with ASL, ASS1 and HSP90AA1; the complex regulates cell-autonomous L-arginine synthesis and citrulline recycling while channeling extracellular L-arginine to nitric oxide synthesis pathway. The cofactor is heme b. FAD is required as a cofactor. Requires FMN as cofactor. It depends on (6R)-L-erythro-5,6,7,8-tetrahydrobiopterin as a cofactor. Polyubiquitinated; mediated by SPSB1, SPSB2 and SPSB4, leading to proteasomal degradation.

The protein localises to the cytoplasm. Its subcellular location is the cytosol. The enzyme catalyses 2 L-arginine + 3 NADPH + 4 O2 + H(+) = 2 L-citrulline + 2 nitric oxide + 3 NADP(+) + 4 H2O. With respect to regulation, regulated by calcium/calmodulin. Produces nitric oxide (NO) which is a messenger molecule with diverse functions throughout the body. In macrophages, NO mediates tumoricidal and bactericidal actions. Also has nitrosylase activity and mediates cysteine S-nitrosylation of cytoplasmic target proteins such PTGS2/COX2. As component of the iNOS-S100A8/9 transnitrosylase complex involved in the selective inflammatory stimulus-dependent S-nitrosylation of GAPDH implicated in regulation of the GAIT complex activity and probably multiple targets including ANXA5, EZR, MSN and VIM. Involved in inflammation, enhances the synthesis of pro-inflammatory mediators such as IL6 and IL8. The sequence is that of Nitric oxide synthase, inducible (NOS2) from Macaca mulatta (Rhesus macaque).